The sequence spans 61 residues: Short neurotoxin 1 (61 aa).

4 disulfides stabilise this stretch: C3–C23, C17–C40, C42–C53, and C54–C59.

It belongs to the three-finger toxin family. Short-chain subfamily. Type I alpha-neurotoxin sub-subfamily. In terms of tissue distribution, expressed by the venom gland.

Its subcellular location is the secreted. In terms of biological role, binds to muscle nicotinic acetylcholine receptor (nAChR) and inhibit acetylcholine from binding to the receptor, thereby impairing neuromuscular transmission. This is Short neurotoxin 1 from Naja annulata annulata (Banded water cobra).